Here is a 464-residue protein sequence, read N- to C-terminus: ATP synthase subunit beta (464 aa).

152–159 (GGAGVGKS) serves as a coordination point for ATP.

This sequence belongs to the ATPase alpha/beta chains family. In terms of assembly, F-type ATPases have 2 components, CF(1) - the catalytic core - and CF(0) - the membrane proton channel. CF(1) has five subunits: alpha(3), beta(3), gamma(1), delta(1), epsilon(1). CF(0) has three main subunits: a(1), b(2) and c(9-12). The alpha and beta chains form an alternating ring which encloses part of the gamma chain. CF(1) is attached to CF(0) by a central stalk formed by the gamma and epsilon chains, while a peripheral stalk is formed by the delta and b chains.

The protein localises to the cell membrane. It carries out the reaction ATP + H2O + 4 H(+)(in) = ADP + phosphate + 5 H(+)(out). Its function is as follows. Produces ATP from ADP in the presence of a proton gradient across the membrane. The catalytic sites are hosted primarily by the beta subunits. This chain is ATP synthase subunit beta, found in Protochlamydia amoebophila (strain UWE25).